Here is an 83-residue protein sequence, read N- to C-terminus: MSSMEGSVLKYPEPTEGSIGASSAKTSWPEVVGMSAEKAKEIILRDKPNAQVEVIPVDAMVHLNFDPNRVFVLVAVARTPTVG.

The interval 1–24 is disordered; the sequence is MSSMEGSVLKYPEPTEGSIGASSA.

It belongs to the protease inhibitor I13 (potato type I serine protease inhibitor) family.

Its function is as follows. Inhibits both subtilisin and chymotrypsin. This is Subtilisin-chymotrypsin inhibitor CI-1A from Hordeum vulgare (Barley).